Here is a 333-residue protein sequence, read N- to C-terminus: GTPase Obg (333 aa).

The Obg domain occupies 1–158 (MFIDSAKIYV…RNIDLELKLL (158 aa)). The disordered stretch occupies residues 121–143 (HGGKGNQHFATPTNRAPRYSEPA). Positions 159-323 (ADIGLVGFPN…LKDVLWRIIQ (165 aa)) constitute an OBG-type G domain. GTP contacts are provided by residues 165–172 (GFPNAGKS), 190–194 (FTTLE), 212–215 (DIPG), 279–282 (SKMD), and 304–306 (SSV). Residues serine 172 and threonine 192 each contribute to the Mg(2+) site.

The protein belongs to the TRAFAC class OBG-HflX-like GTPase superfamily. OBG GTPase family. Monomer. It depends on Mg(2+) as a cofactor.

Its subcellular location is the cytoplasm. An essential GTPase which binds GTP, GDP and possibly (p)ppGpp with moderate affinity, with high nucleotide exchange rates and a fairly low GTP hydrolysis rate. Plays a role in control of the cell cycle, stress response, ribosome biogenesis and in those bacteria that undergo differentiation, in morphogenesis control. In Chloroherpeton thalassium (strain ATCC 35110 / GB-78), this protein is GTPase Obg.